We begin with the raw amino-acid sequence, 138 residues long: ATP synthase epsilon chain (138 aa).

It belongs to the ATPase epsilon chain family. As to quaternary structure, F-type ATPases have 2 components, CF(1) - the catalytic core - and CF(0) - the membrane proton channel. CF(1) has five subunits: alpha(3), beta(3), gamma(1), delta(1), epsilon(1). CF(0) has three main subunits: a, b and c.

The protein localises to the cell membrane. Produces ATP from ADP in the presence of a proton gradient across the membrane. This is ATP synthase epsilon chain (atpC) from Streptococcus mutans serotype c (strain ATCC 700610 / UA159).